The sequence spans 224 residues: tRNA (guanine-N(7)-)-methyltransferase (224 aa).

Residues glutamate 54, glutamate 79, glutamate 106, and aspartate 129 each contribute to the S-adenosyl-L-methionine site. Residue aspartate 129 is part of the active site. Residues lysine 133 and aspartate 165 each coordinate substrate.

It belongs to the class I-like SAM-binding methyltransferase superfamily. TrmB family.

It catalyses the reaction guanosine(46) in tRNA + S-adenosyl-L-methionine = N(7)-methylguanosine(46) in tRNA + S-adenosyl-L-homocysteine. The protein operates within tRNA modification; N(7)-methylguanine-tRNA biosynthesis. Its function is as follows. Catalyzes the formation of N(7)-methylguanine at position 46 (m7G46) in tRNA. This Chlamydia trachomatis serovar D (strain ATCC VR-885 / DSM 19411 / UW-3/Cx) protein is tRNA (guanine-N(7)-)-methyltransferase.